A 438-amino-acid chain; its full sequence is Putative B3 domain-containing protein Os04g0676650 (438 aa).

Residues 1–11 (MADARGSSSSS) show a composition bias toward low complexity. Disordered stretches follow at residues 1 to 30 (MADA…DFVG) and 225 to 285 (SSSH…MNQN). A compositionally biased stretch (gly residues) spans 12 to 30 (GDGGGGEGKGGAGHGDFVG). Residues 258 to 269 (RRSDMESEKNDD) show a composition bias toward basic and acidic residues. Residues 272 to 285 (DQTPVSEPPSMNQN) show a composition bias toward polar residues. The TF-B3 DNA-binding region spans 302–404 (LRKELTNSDV…KFVVRGEKAI (103 aa)).

It is found in the nucleus. The sequence is that of Putative B3 domain-containing protein Os04g0676650 from Oryza sativa subsp. japonica (Rice).